Reading from the N-terminus, the 955-residue chain is Beta-agarase B (955 aa).

Belongs to the glycosyl hydrolase 50 family.

The enzyme catalyses Hydrolysis of (1-&gt;4)-beta-D-galactosidic linkages in agarose, giving the tetramer as the predominant product.. Its function is as follows. Hydrolyzes agarose to yield predominantly neoagarotetraose and neoagarohexaose. This chain is Beta-agarase B (agaB), found in Vibrio sp. (strain JT0107).